A 172-amino-acid chain; its full sequence is MADSFLFYNLSEAQMTFQDVMERLKAFVQKDPRSSYVLSIGTDSQVYRDYTKFITALHLHRTGKGAWGCLKNHTVDRPIHSLREKISLETAYSQETAAHILDGHLMDITDLLLPFTGEGADLTFEVHLDIGKKGLTKDLIQEMTGRITSMGIEAKIKPDSYTAFSYANRFTK.

This is an uncharacterized protein from Bacillus subtilis (strain 168).